We begin with the raw amino-acid sequence, 971 residues long: Piwi-like protein 2 (971 aa).

Arg-45 bears the Symmetric dimethylarginine mark. An Omega-N-methylarginine; by PRMT5; alternate modification is found at Arg-74. Arg-74 is modified (symmetric dimethylarginine; by PRMT5; alternate). Arg-83 carries the omega-N-methylarginine; alternate modification. Residues Arg-83 and Arg-95 each carry the symmetric dimethylarginine; alternate modification. Omega-N-methylarginine; by PRMT5; alternate is present on Arg-95. At Arg-100 the chain carries Symmetric dimethylarginine; by PRMT5; alternate. Arg-100 carries the omega-N-methylarginine; alternate modification. The interval 102-124 is disordered; that stretch reads LSANMVRKDREEPRSSLPDPSVL. Arg-144 and Arg-156 each carry symmetric dimethylarginine. A disordered region spans residues 159–200; sequence SSIGRGMDKPPSAFGLTARDPPRLPQPPALSPTSLHSADPPP. Position 163 is a symmetric dimethylarginine; by PRMT5 (Arg-163). The PAZ domain maps to 387–500; that stretch reads SVLDVMHAIY…LLPELSFMTG (114 aa). The residue at position 549 (Arg-549) is a Symmetric dimethylarginine; by PRMT5. Residues 666-957 form the Piwi domain; that stretch reads MVVCIIMGTR…LAFLSGQILH (292 aa). Catalysis depends on residues Asp-743, Glu-781, Asp-813, and His-946.

The protein belongs to the argonaute family. Piwi subfamily. As to quaternary structure, interacts with DDX4, MAEL, EIF3A, EIF4E, EIF4G, PRMT5 and WDR77. Associates with EIF4E- and EIF4G-containing m7G cap-binding complexes. Interacts (when methylated on arginine residues) with TDRD1 and TDRKH/TDRD2. Interacts with TDRD12. Component of the PET complex, at least composed of EXD1, PIWIL2, TDRD12 and piRNAs. Interacts with MOV10L1. Interacts with GPAT2. Interacts with Tex19.1 and, probably, Tex19.2. Interacts (via PIWI domain) with BMAL1 and CLOCK. Interacts with GSK3B. Interacts with TEX15. Mg(2+) is required as a cofactor. In terms of processing, arginine methylation by PRMT5 is required for the interaction with Tudor domain-containing protein TDRD1 and subsequent localization to the meiotic nuage, also named P granule. Expressed in adult testis, specifically in spermatocytes and in spermatogonia. Only detected in primordial germ cells of both sexes. Widely expressed in tumors. Also present at early stages of oocyte growth. Present in the mitotic spermatogonia. Not detected in the first stages of meiosis (preleptotene and leptotene). Detected at the late zygotene stage and increases throughout pachytene, declining from this stage onward until expression stops at the early round spermatid stage (at protein level).

Its subcellular location is the cytoplasm. Endoribonuclease that plays a central role during spermatogenesis by repressing transposable elements and preventing their mobilization, which is essential for the germline integrity. Plays an essential role in meiotic differentiation of spermatocytes, germ cell differentiation and in self-renewal of spermatogonial stem cells. Its presence in oocytes suggests that it may participate in similar functions during oogenesis in females. Acts via the piRNA metabolic process, which mediates the repression of transposable elements during meiosis by forming complexes composed of piRNAs and Piwi proteins and govern the methylation and subsequent repression of transposons. During piRNA biosynthesis, plays a key role in the piRNA amplification loop, also named ping-pong amplification cycle, by acting as a 'slicer-competent' piRNA endoribonuclease that cleaves primary piRNAs, which are then loaded onto 'slicer-incompetent' PIWIL4. PIWIL2 slicing produces a pre-miRNA intermediate, which is then processed in mature piRNAs, and as well as a 16 nucleotide by-product that is degraded. Required for PIWIL4/MIWI2 nuclear localization and association with secondary piRNAs antisense. Besides their function in transposable elements repression, piRNAs are probably involved in other processes during meiosis such as translation regulation. Indirectly modulates expression of genes such as PDGFRB, SLC2A1, ITGA6, GJA7, THY1, CD9 and STRA8. Represses circadian rhythms by promoting the stability and activity of core clock components BMAL1 and CLOCK by inhibiting GSK3B-mediated phosphorylation and ubiquitination-dependent degradation of these proteins. The chain is Piwi-like protein 2 from Mus musculus (Mouse).